The sequence spans 359 residues: Membrane-bound lytic murein transglycosylase C (359 aa).

The N-terminal stretch at 1-16 is a signal peptide; the sequence is MKKYLALALIAPLLIS. C17 is lipidated: N-palmitoyl cysteine. C17 carries S-diacylglycerol cysteine lipidation.

It belongs to the transglycosylase Slt family.

The protein resides in the cell outer membrane. It catalyses the reaction Exolytic cleavage of the (1-&gt;4)-beta-glycosidic linkage between N-acetylmuramic acid (MurNAc) and N-acetylglucosamine (GlcNAc) residues in peptidoglycan, from either the reducing or the non-reducing ends of the peptidoglycan chains, with concomitant formation of a 1,6-anhydrobond in the MurNAc residue.. Its function is as follows. Murein-degrading enzyme. May play a role in recycling of muropeptides during cell elongation and/or cell division. The chain is Membrane-bound lytic murein transglycosylase C from Shigella sonnei (strain Ss046).